A 734-amino-acid polypeptide reads, in one-letter code: Histone-lysine N-methyltransferase SET9 (734 aa).

The region spanning Cys-116–Ser-230 is the SET domain. Disordered regions lie at residues Phe-343–Thr-459, Ala-523–Ala-543, Ala-567–Val-591, and Arg-681–Gln-734. Positions Glu-407–Pro-418 are enriched in basic and acidic residues. Residues Ser-527–Ala-543 are compositionally biased toward polar residues. Basic and acidic residues predominate over residues Ser-578–Arg-587.

This sequence belongs to the class V-like SAM-binding methyltransferase superfamily. Histone-lysine methyltransferase family. Suvar4-20 subfamily.

The protein localises to the nucleus. It is found in the chromosome. It carries out the reaction L-lysyl(20)-[histone H4] + 3 S-adenosyl-L-methionine = N(6),N(6),N(6)-trimethyl-L-lysyl(20)-[histone H4] + 3 S-adenosyl-L-homocysteine + 3 H(+). Histone methyltransferase that trimethylates 'Lys-20' of histone H4 to form H4K20me3. The polypeptide is Histone-lysine N-methyltransferase SET9 (SET9) (Chaetomium globosum (strain ATCC 6205 / CBS 148.51 / DSM 1962 / NBRC 6347 / NRRL 1970) (Soil fungus)).